The following is a 159-amino-acid chain: Ribosomal RNA large subunit methyltransferase H (159 aa).

Residues leucine 76, glycine 108, and 127 to 132 (FGLLTL) each bind S-adenosyl-L-methionine.

It belongs to the RNA methyltransferase RlmH family. Homodimer.

It is found in the cytoplasm. It carries out the reaction pseudouridine(1915) in 23S rRNA + S-adenosyl-L-methionine = N(3)-methylpseudouridine(1915) in 23S rRNA + S-adenosyl-L-homocysteine + H(+). Functionally, specifically methylates the pseudouridine at position 1915 (m3Psi1915) in 23S rRNA. The polypeptide is Ribosomal RNA large subunit methyltransferase H (Streptococcus mutans serotype c (strain ATCC 700610 / UA159)).